Here is a 428-residue protein sequence, read N- to C-terminus: Enolase (428 aa).

Residue glutamine 162 participates in (2R)-2-phosphoglycerate binding. Catalysis depends on glutamate 204, which acts as the Proton donor. Positions 241, 282, and 309 each coordinate Mg(2+). Residues lysine 334, arginine 363, serine 364, and lysine 385 each coordinate (2R)-2-phosphoglycerate. Catalysis depends on lysine 334, which acts as the Proton acceptor.

Belongs to the enolase family. Mg(2+) serves as cofactor.

It localises to the cytoplasm. Its subcellular location is the secreted. It is found in the cell surface. It catalyses the reaction (2R)-2-phosphoglycerate = phosphoenolpyruvate + H2O. Its pathway is carbohydrate degradation; glycolysis; pyruvate from D-glyceraldehyde 3-phosphate: step 4/5. Functionally, catalyzes the reversible conversion of 2-phosphoglycerate (2-PG) into phosphoenolpyruvate (PEP). It is essential for the degradation of carbohydrates via glycolysis. The chain is Enolase from Mycobacterium ulcerans (strain Agy99).